Here is a 485-residue protein sequence, read N- to C-terminus: Cysteine--tRNA ligase (485 aa).

Position 29 (cysteine 29) interacts with Zn(2+). Positions 31-41 match the 'HIGH' region motif; sequence VTVYDHCHIGH. Cysteine 209, histidine 234, and glutamate 238 together coordinate Zn(2+). The short motif at 266 to 270 is the 'KMSKS' region element; sequence KMSKS. ATP is bound at residue lysine 269.

Belongs to the class-I aminoacyl-tRNA synthetase family. Monomer. Zn(2+) serves as cofactor.

It is found in the cytoplasm. The enzyme catalyses tRNA(Cys) + L-cysteine + ATP = L-cysteinyl-tRNA(Cys) + AMP + diphosphate. This chain is Cysteine--tRNA ligase, found in Geobacter metallireducens (strain ATCC 53774 / DSM 7210 / GS-15).